Consider the following 600-residue polypeptide: Aspartate--tRNA(Asp/Asn) ligase (600 aa).

An L-aspartate-binding site is contributed by Glu181. The segment at Gln205–Lys208 is aspartate. An L-aspartate-binding site is contributed by Arg227. ATP contacts are provided by residues Arg227–Glu229 and Gln236. His455 contributes to the L-aspartate binding site. Glu490 contributes to the ATP binding site. Arg497 contributes to the L-aspartate binding site. Gly542–Arg545 is an ATP binding site.

This sequence belongs to the class-II aminoacyl-tRNA synthetase family. Type 1 subfamily. Homodimer.

It is found in the cytoplasm. The catalysed reaction is tRNA(Asx) + L-aspartate + ATP = L-aspartyl-tRNA(Asx) + AMP + diphosphate. Functionally, aspartyl-tRNA synthetase with relaxed tRNA specificity since it is able to aspartylate not only its cognate tRNA(Asp) but also tRNA(Asn). Reaction proceeds in two steps: L-aspartate is first activated by ATP to form Asp-AMP and then transferred to the acceptor end of tRNA(Asp/Asn). The chain is Aspartate--tRNA(Asp/Asn) ligase from Methylacidiphilum infernorum (isolate V4) (Methylokorus infernorum (strain V4)).